Consider the following 390-residue polypeptide: Transforming growth factor beta-1 proprotein (390 aa).

Residues 1–29 (MPPSRLRLLPLLLPLLWLLVLAPGRPASG) form the signal peptide. The straightjacket domain stretch occupies residues 30–74 (LSTCKTIDMELVKRKRIEAIRGQILSKLRLASPPSQGDVPPGPLP). An arm domain region spans residues 75–271 (EAVLALYNST…ATPLERAQHL (197 aa)). Asn82, Asn136, and Asn176 each carry an N-linked (GlcNAc...) asparagine glycan. Residues 226–252 (DSKDNTLRVEINGIGPKRRGDLAAIHG) form a bowtie tail region. The Cell attachment site signature appears at 244–246 (RGD). Cystine bridges form between Cys285/Cys294, Cys293/Cys356, Cys322/Cys387, and Cys326/Cys389.

This sequence belongs to the TGF-beta family. Homodimer; disulfide-linked. Interacts with the serine proteases, HTRA1 and HTRA3: the interaction with either inhibits TGFB1-mediated signaling and the HTRA protease activity is required for this inhibition. May interact with THSD4; this interaction may lead to sequestration by FBN1 microfibril assembly and attenuation of TGFB signaling. Interacts with CD109, DPT and ASPN. Interacts with EFEMP2. Interacts with TSKU; the interaction contributes to regulation of the hair cycle. Interacts with TGFBR3. As to quaternary structure, homodimer; disulfide-linked. Interacts with transforming growth factor beta-1 (TGF-beta-1) chain; interaction is non-covalent and maintains TGF-beta-1 in a latent state; each latency-associated peptide (LAP) monomer interacts with TGF-beta-1 in the other monomer. Interacts with LTBP1; leading to regulation of TGF-beta-1 activation. Interacts with LRRC32/GARP; leading to regulation of TGF-beta-1 activation on the surface of activated regulatory T-cells (Tregs). Interacts with LRRC33/NRROS; leading to regulation of TGF-beta-1 in macrophages and microglia. Interacts (via cell attachment site) with integrins ITGAV and ITGB6 (ITGAV:ITGB6), leading to release of the active TGF-beta-1. Interacts with NREP; the interaction results in a decrease in TGFB1 autoinduction. Interacts with HSP90AB1; inhibits latent TGFB1 activation. In terms of assembly, homodimer; disulfide-linked. Interacts with TGF-beta receptors (TGFBR1 and TGFBR2), leading to signal transduction. Transforming growth factor beta-1 proprotein: The precursor proprotein is cleaved in the Golgi apparatus by FURIN to form Transforming growth factor beta-1 (TGF-beta-1) and Latency-associated peptide (LAP) chains, which remain non-covalently linked, rendering TGF-beta-1 inactive. In terms of processing, N-glycosylated. Deglycosylation leads to activation of Transforming growth factor beta-1 (TGF-beta-1); mechanisms triggering deglycosylation-driven activation of TGF-beta-1 are however unclear.

It is found in the secreted. It localises to the extracellular space. The protein resides in the extracellular matrix. Transforming growth factor beta-1 proprotein: Precursor of the Latency-associated peptide (LAP) and Transforming growth factor beta-1 (TGF-beta-1) chains, which constitute the regulatory and active subunit of TGF-beta-1, respectively. In terms of biological role, required to maintain the Transforming growth factor beta-1 (TGF-beta-1) chain in a latent state during storage in extracellular matrix. Associates non-covalently with TGF-beta-1 and regulates its activation via interaction with 'milieu molecules', such as LTBP1, LRRC32/GARP and LRRC33/NRROS, that control activation of TGF-beta-1. Interaction with LRRC33/NRROS regulates activation of TGF-beta-1 in macrophages and microglia. Interaction with LRRC32/GARP controls activation of TGF-beta-1 on the surface of activated regulatory T-cells (Tregs). Interaction with integrins (ITGAV:ITGB6 or ITGAV:ITGB8) results in distortion of the Latency-associated peptide chain and subsequent release of the active TGF-beta-1. Functionally, multifunctional protein that regulates the growth and differentiation of various cell types and is involved in various processes, such as normal development, immune function, microglia function and responses to neurodegeneration. Activation into mature form follows different steps: following cleavage of the proprotein in the Golgi apparatus, Latency-associated peptide (LAP) and Transforming growth factor beta-1 (TGF-beta-1) chains remain non-covalently linked rendering TGF-beta-1 inactive during storage in extracellular matrix. At the same time, LAP chain interacts with 'milieu molecules', such as LTBP1, LRRC32/GARP and LRRC33/NRROS that control activation of TGF-beta-1 and maintain it in a latent state during storage in extracellular milieus. TGF-beta-1 is released from LAP by integrins (ITGAV:ITGB6 or ITGAV:ITGB8): integrin-binding to LAP stabilizes an alternative conformation of the LAP bowtie tail and results in distortion of the LAP chain and subsequent release of the active TGF-beta-1. Once activated following release of LAP, TGF-beta-1 acts by binding to TGF-beta receptors (TGFBR1 and TGFBR2), which transduce signal. While expressed by many cells types, TGF-beta-1 only has a very localized range of action within cell environment thanks to fine regulation of its activation by Latency-associated peptide chain (LAP) and 'milieu molecules'. Plays an important role in bone remodeling: acts as a potent stimulator of osteoblastic bone formation, causing chemotaxis, proliferation and differentiation in committed osteoblasts. Can promote either T-helper 17 cells (Th17) or regulatory T-cells (Treg) lineage differentiation in a concentration-dependent manner. At high concentrations, leads to FOXP3-mediated suppression of RORC and down-regulation of IL-17 expression, favoring Treg cell development. At low concentrations in concert with IL-6 and IL-21, leads to expression of the IL-17 and IL-23 receptors, favoring differentiation to Th17 cells. Stimulates sustained production of collagen through the activation of CREB3L1 by regulated intramembrane proteolysis (RIP). Mediates SMAD2/3 activation by inducing its phosphorylation and subsequent translocation to the nucleus. Positively regulates odontoblastic differentiation in dental papilla cells, via promotion of IPO7-mediated translocation of phosphorylated SMAD2 to the nucleus and subsequent transcription of target genes. Can induce epithelial-to-mesenchymal transition (EMT) and cell migration in various cell types. This chain is Transforming growth factor beta-1 proprotein (TGFB1), found in Cavia porcellus (Guinea pig).